We begin with the raw amino-acid sequence, 190 residues long: Ras-like GTP-binding protein RhoL (190 aa).

Residue 18-25 (GDGMVGKT) coordinates GTP. An Effector region motif is present at residues 40–48 (YIPTVFDNH). GTP is bound by residues 65-69 (DTAGQ) and 123-126 (TKLD). The residue at position 187 (C187) is a Cysteine methyl ester. The S-geranylgeranyl cysteine moiety is linked to residue C187. A propeptide spans 188–190 (KIL) (removed in mature form).

This sequence belongs to the small GTPase superfamily. Rho family. As to expression, highly expressed in the embryonic cephalic mesoderm starting from stage 6 and fading by stage 11. Hemocyte precursor cells.

The protein localises to the cell membrane. Functionally, essential for the maturation of hemocytes. The chain is Ras-like GTP-binding protein RhoL (RhoL) from Drosophila melanogaster (Fruit fly).